We begin with the raw amino-acid sequence, 349 residues long: MGGVSFLSTVPSFTNTTNHQHLTTLSSSSHRSAVIRCSKIEPQVSGESLAFHRRDVLKLAGTAVGMELIGNGFINNVGDAKAADLNQRRQRSEFQSKIKILLSTTIKAKPELVPSLLKLALNDAMTYDKATKSGGANGSIRFSSELSRAENEGLSDGLSLIEEVKKEIDSISKGGPISYADIIQLAGQSAVKFTYLASAIRKCGGNEEKGNLLYTAYGSAGQWGLFDRNFGRSDATEADPEGRVPQWGKATVQEMKDKFIAVGLGPRQLAVMSAFLGPDQAATEQLLATDPQVAPWVQKYQRSRETVSQTDYEVDLITAFTKLSCLGQQINFEAYTYPVERINLSKLKL.

S155 is modified (phosphoserine).

The protein belongs to the peroxidase family.

It is found in the plastid. The protein localises to the chloroplast thylakoid lumen. The protein is Thylakoid lumenal 29 kDa protein, chloroplastic (TL29) of Arabidopsis thaliana (Mouse-ear cress).